The primary structure comprises 827 residues: Mitogen-activated protein kinase kinase kinase kinase 1 (827 aa).

Positions 17–274 (YDLLQRLGGG…ATKMLSHQLV (258 aa)) constitute a Protein kinase domain. ATP-binding positions include 23–31 (LGGGTYGEV) and Lys46. The active-site Proton acceptor is the Asp137. Thr165 bears the Phosphothreonine; by autocatalysis mark. Ser171 is modified (phosphoserine; by autocatalysis). Thr175 bears the Phosphothreonine; by autocatalysis mark. A disordered region spans residues 296 to 315 (KGLPVDIEDEEPEPPPAIPR). Residue Thr354 is modified to Phosphothreonine; by autocatalysis. The segment at 359 to 485 (PPAHFGSTSP…KMRGKMENEK (127 aa)) is disordered. Residues Ser373, Ser375, Ser403, Ser405, and Ser419 each carry the phosphoserine modification. The segment covering 374–383 (DSDDDYDDVD) has biased composition (acidic residues). Composition is skewed to pro residues over residues 429-443 (GPPPRTPRPGPPPAT) and 461-471 (APEPGQPPLVP). Residues 472 to 485 (PRKEKMRGKMENEK) show a composition bias toward basic and acidic residues. The CNH domain occupies 501–806 (PLQIHSTAAW…TFRLLCSPRP (306 aa)). Ser592 is modified (phosphoserine).

This sequence belongs to the protein kinase superfamily. STE Ser/Thr protein kinase family. STE20 subfamily. In terms of assembly, interacts with MAP3K1. Interacts with FBXW8. Interacts with CLNK (via its SH2 domain). Mg(2+) serves as cofactor. Autophosphorylates: phosphorylation promotes ubiquitination by the Cul7-RING(FBXW8) ubiquitin-protein ligase complex, leading to its degradation by the proteasome. Post-translationally, tyrosine-phosphorylated after activation of hemopoietic cells. In terms of processing, ubiquitinated by the Cul7-RING(FBXW8) ubiquitin-protein ligase complex following autophosphorylation, leading to its degradation by the proteasome. As to expression, expressed in hemopoietic cells (at protein level). Ubiquitously expressed in all tissues examined at embryonic stage 16.5 dpc with high levels in lung, heart and fetal liver. In the neonate, expression is restricted to the tissues which undergo lineage decisions, lung, thymus, liver, kidney and brain. In the adult, expression is limited to hemopoietic organs, thymus, bone marrow, and spleen and to the testis.

The enzyme catalyses L-seryl-[protein] + ATP = O-phospho-L-seryl-[protein] + ADP + H(+). The catalysed reaction is L-threonyl-[protein] + ATP = O-phospho-L-threonyl-[protein] + ADP + H(+). Its function is as follows. Serine/threonine-protein kinase, which plays a role in the response to environmental stress. Appears to act upstream of the JUN N-terminal pathway. Activator of the Hippo signaling pathway which plays a pivotal role in organ size control and tumor suppression by restricting proliferation and promoting apoptosis. MAP4Ks act in parallel to and are partially redundant with STK3/MST2 and STK4/MST2 in the phosphorylation and activation of LATS1/2, and establish MAP4Ks as components of the expanded Hippo pathway. May play a role in hematopoietic lineage decisions and growth regulation. Together with CLNK, it enhances CD3-triggered activation of T-cells and subsequent IL2 production. The protein is Mitogen-activated protein kinase kinase kinase kinase 1 (Map4k1) of Mus musculus (Mouse).